Here is a 132-residue protein sequence, read N- to C-terminus: Small ribosomal subunit protein uS8 (132 aa).

Belongs to the universal ribosomal protein uS8 family. As to quaternary structure, part of the 30S ribosomal subunit. Contacts proteins S5 and S12.

One of the primary rRNA binding proteins, it binds directly to 16S rRNA central domain where it helps coordinate assembly of the platform of the 30S subunit. The protein is Small ribosomal subunit protein uS8 of Xanthomonas euvesicatoria pv. vesicatoria (strain 85-10) (Xanthomonas campestris pv. vesicatoria).